Consider the following 338-residue polypeptide: UDP-3-O-acylglucosamine N-acyltransferase (338 aa).

Histidine 243 acts as the Proton acceptor in catalysis.

The protein belongs to the transferase hexapeptide repeat family. LpxD subfamily. In terms of assembly, homotrimer.

The enzyme catalyses a UDP-3-O-[(3R)-3-hydroxyacyl]-alpha-D-glucosamine + a (3R)-hydroxyacyl-[ACP] = a UDP-2-N,3-O-bis[(3R)-3-hydroxyacyl]-alpha-D-glucosamine + holo-[ACP] + H(+). It functions in the pathway bacterial outer membrane biogenesis; LPS lipid A biosynthesis. Its function is as follows. Catalyzes the N-acylation of UDP-3-O-acylglucosamine using 3-hydroxyacyl-ACP as the acyl donor. Is involved in the biosynthesis of lipid A, a phosphorylated glycolipid that anchors the lipopolysaccharide to the outer membrane of the cell. The sequence is that of UDP-3-O-acylglucosamine N-acyltransferase from Amoebophilus asiaticus (strain 5a2).